The chain runs to 284 residues: tRNA uridine(34) hydroxylase (284 aa).

The Rhodanese domain occupies 132-226; the sequence is AGRPVVMLDT…YFEEVGGAHY (95 aa). The active-site Cysteine persulfide intermediate is cysteine 186.

It belongs to the TrhO family.

The catalysed reaction is uridine(34) in tRNA + AH2 + O2 = 5-hydroxyuridine(34) in tRNA + A + H2O. Catalyzes oxygen-dependent 5-hydroxyuridine (ho5U) modification at position 34 in tRNAs. The sequence is that of tRNA uridine(34) hydroxylase from Burkholderia ambifaria (strain MC40-6).